The chain runs to 127 residues: Fluoride-specific ion channel FluC (127 aa).

The next 4 membrane-spanning stretches (helical) occupy residues 7–27 (LLVALGGALGSLLRYGLGAWV), 31–51 (LGAGFPWSTLFVNALGSFLIG), 68–88 (LFLAVGVLGGFTTFSSLSYET), and 97–117 (VGKALLYAFGSLFLGLLLAFL). The Na(+) site is built by Gly76 and Thr79.

This sequence belongs to the fluoride channel Fluc/FEX (TC 1.A.43) family.

The protein resides in the cell inner membrane. It catalyses the reaction fluoride(in) = fluoride(out). Its activity is regulated as follows. Na(+) is not transported, but it plays an essential structural role and its presence is essential for fluoride channel function. Fluoride-specific ion channel. Important for reducing fluoride concentration in the cell, thus reducing its toxicity. In Thermus thermophilus (strain ATCC BAA-163 / DSM 7039 / HB27), this protein is Fluoride-specific ion channel FluC.